A 382-amino-acid chain; its full sequence is MKSLSILGSTGSIGLSTLDVVRQHPEKFNVTGLAEGHDINLLAEQIKEFRPDIVSVRDKASAGLLREQLGSEKPEILWGIEGAAAVGAAEGSEMVVSAIVGAAGLVPTVSAIKAGKDIALANKETLVVAGQLVSDLVKEHKVTLLPVDSEHSAIFQSLSGHRKEDIERIILTASGGPFRHTSAEDLRHVGPEKALKHPQWTMGAKITIDSATLMNKGLEVIEAHWLFDMPADKIGVVVHPQSIIHSMVEYIDGCVMAQLGAPDMRAPIAYALAWPERCESGIKKLDLTQIGTLTFEQPDMERFPALRLAFDALKAGQTFPAVLNAANEIAVAAFLDKKIGFTDIPAIADRTMQAHDPYTPSGLDEYLAADRWARDTAKTMTN.

Residues T10, G11, S12, I13, G36, and N122 each coordinate NADPH. Residue K123 participates in 1-deoxy-D-xylulose 5-phosphate binding. E124 lines the NADPH pocket. A Mn(2+)-binding site is contributed by D148. Residues S149, E150, S174, and H197 each coordinate 1-deoxy-D-xylulose 5-phosphate. Mn(2+) is bound at residue E150. G203 is a binding site for NADPH. Residues S210, N215, K216, and E219 each coordinate 1-deoxy-D-xylulose 5-phosphate. E219 lines the Mn(2+) pocket.

The protein belongs to the DXR family. The cofactor is Mg(2+). Mn(2+) serves as cofactor.

It catalyses the reaction 2-C-methyl-D-erythritol 4-phosphate + NADP(+) = 1-deoxy-D-xylulose 5-phosphate + NADPH + H(+). Its pathway is isoprenoid biosynthesis; isopentenyl diphosphate biosynthesis via DXP pathway; isopentenyl diphosphate from 1-deoxy-D-xylulose 5-phosphate: step 1/6. Catalyzes the NADPH-dependent rearrangement and reduction of 1-deoxy-D-xylulose-5-phosphate (DXP) to 2-C-methyl-D-erythritol 4-phosphate (MEP). The protein is 1-deoxy-D-xylulose 5-phosphate reductoisomerase of Chlorobium phaeobacteroides (strain BS1).